A 598-amino-acid chain; its full sequence is Thiol:disulfide interchange protein DsbD (598 aa).

The first 21 residues, methionine 1 to alanine 21, serve as a signal peptide directing secretion. Residues cysteine 130 and cysteine 136 are joined by a disulfide bond. The interval threonine 158–leucine 180 is disordered. Over residues methionine 159–leucine 180 the composition is skewed to polar residues. 8 helical membrane passes run leucine 198–leucine 220, leucine 240–leucine 262, leucine 274–leucine 296, alanine 324–alanine 346, threonine 353–phenylalanine 375, glycine 385–glutamate 407, tryptophan 414–tyrosine 431, and alanine 446–alanine 468. A disulfide bridge links cysteine 212 with cysteine 333. The region spanning phenylalanine 456 to asparagine 598 is the Thioredoxin domain. Cysteine 513 and cysteine 516 are oxidised to a cystine.

The protein belongs to the thioredoxin family. DsbD subfamily.

It is found in the cell inner membrane. The catalysed reaction is [protein]-dithiol + NAD(+) = [protein]-disulfide + NADH + H(+). The enzyme catalyses [protein]-dithiol + NADP(+) = [protein]-disulfide + NADPH + H(+). Required to facilitate the formation of correct disulfide bonds in some periplasmic proteins and for the assembly of the periplasmic c-type cytochromes. Acts by transferring electrons from cytoplasmic thioredoxin to the periplasm. This transfer involves a cascade of disulfide bond formation and reduction steps. The chain is Thiol:disulfide interchange protein DsbD from Vibrio vulnificus (strain YJ016).